A 184-amino-acid polypeptide reads, in one-letter code: dCTP deaminase (184 aa).

Residue 107–112 (KSTYAR) coordinates dCTP. Glu-133 (proton donor/acceptor) is an active-site residue. DCTP contacts are provided by Gln-152, Tyr-166, and Gln-176.

The protein belongs to the dCTP deaminase family. Homotrimer.

The catalysed reaction is dCTP + H2O + H(+) = dUTP + NH4(+). The protein operates within pyrimidine metabolism; dUMP biosynthesis; dUMP from dCTP (dUTP route): step 1/2. Functionally, catalyzes the deamination of dCTP to dUTP. This is dCTP deaminase from Granulibacter bethesdensis (strain ATCC BAA-1260 / CGDNIH1).